The primary structure comprises 349 residues: Hydroxymethylglutaryl-CoA synthase (349 aa).

Positions 29 and 30 each coordinate (3S)-3-hydroxy-3-methylglutaryl-CoA. Catalysis depends on Glu81, which acts as the Proton donor/acceptor. (3S)-3-hydroxy-3-methylglutaryl-CoA-binding residues include Cys113, Thr154, Thr202, and His235. Residue Cys113 is the Acyl-thioester intermediate of the active site. The active-site Proton donor/acceptor is His235. Position 240 (Arg240) interacts with CoA. Residues Arg244, Asn267, and Ser297 each coordinate (3S)-3-hydroxy-3-methylglutaryl-CoA.

It belongs to the thiolase-like superfamily. Archaeal HMG-CoA synthase family. As to quaternary structure, interacts with acetoacetyl-CoA thiolase that catalyzes the precedent step in the pathway and with a DUF35 protein. The acetoacetyl-CoA thiolase/HMG-CoA synthase complex channels the intermediate via a fused CoA-binding site, which allows for efficient coupling of the endergonic thiolase reaction with the exergonic HMGCS reaction.

It carries out the reaction acetoacetyl-CoA + acetyl-CoA + H2O = (3S)-3-hydroxy-3-methylglutaryl-CoA + CoA + H(+). The protein operates within metabolic intermediate biosynthesis; (R)-mevalonate biosynthesis; (R)-mevalonate from acetyl-CoA: step 2/3. Catalyzes the condensation of acetyl-CoA with acetoacetyl-CoA to form 3-hydroxy-3-methylglutaryl-CoA (HMG-CoA). Functions in the mevalonate (MVA) pathway leading to isopentenyl diphosphate (IPP), a key precursor for the biosynthesis of isoprenoid compounds that are building blocks of archaeal membrane lipids. The polypeptide is Hydroxymethylglutaryl-CoA synthase (Caldivirga maquilingensis (strain ATCC 700844 / DSM 13496 / JCM 10307 / IC-167)).